The primary structure comprises 339 residues: UPF0324 membrane protein M6_Spy0799 (339 aa).

9 helical membrane-spanning segments follow: residues 7 to 24 (KLPG…AWYL), 28 to 50 (FPII…FYEH), 57 to 79 (GISF…GLNL), 84 to 106 (AVGM…VAYG), 118 to 140 (ATLV…APVI), 150 to 172 (AISV…GQLL), 256 to 275 (FILF…SLGV), 290 to 307 (FIVM…LVKL), and 314 to 336 (AILL…QLSL).

This sequence belongs to the UPF0324 family.

The protein localises to the cell membrane. The protein is UPF0324 membrane protein M6_Spy0799 of Streptococcus pyogenes serotype M6 (strain ATCC BAA-946 / MGAS10394).